The chain runs to 125 residues: Phosphoribosyl-AMP cyclohydrolase (125 aa).

A Mg(2+)-binding site is contributed by aspartate 74. Cysteine 75 serves as a coordination point for Zn(2+). 2 residues coordinate Mg(2+): aspartate 76 and aspartate 78. Zn(2+)-binding residues include cysteine 92 and cysteine 99.

This sequence belongs to the PRA-CH family. Homodimer. The cofactor is Mg(2+). Zn(2+) serves as cofactor.

It is found in the cytoplasm. It catalyses the reaction 1-(5-phospho-beta-D-ribosyl)-5'-AMP + H2O = 1-(5-phospho-beta-D-ribosyl)-5-[(5-phospho-beta-D-ribosylamino)methylideneamino]imidazole-4-carboxamide. The protein operates within amino-acid biosynthesis; L-histidine biosynthesis; L-histidine from 5-phospho-alpha-D-ribose 1-diphosphate: step 3/9. Catalyzes the hydrolysis of the adenine ring of phosphoribosyl-AMP. The protein is Phosphoribosyl-AMP cyclohydrolase of Citrifermentans bemidjiense (strain ATCC BAA-1014 / DSM 16622 / JCM 12645 / Bem) (Geobacter bemidjiensis).